A 250-amino-acid chain; its full sequence is 2,3-bisphosphoglycerate-dependent phosphoglycerate mutase (250 aa).

Substrate is bound by residues 8–15 (RHGESKWN), 21–22 (TG), Arg60, 87–90 (ERHY), Lys98, 114–115 (RR), and 183–184 (GN). His9 acts as the Tele-phosphohistidine intermediate in catalysis. Glu87 acts as the Proton donor/acceptor in catalysis.

This sequence belongs to the phosphoglycerate mutase family. BPG-dependent PGAM subfamily.

It catalyses the reaction (2R)-2-phosphoglycerate = (2R)-3-phosphoglycerate. It participates in carbohydrate degradation; glycolysis; pyruvate from D-glyceraldehyde 3-phosphate: step 3/5. Functionally, catalyzes the interconversion of 2-phosphoglycerate and 3-phosphoglycerate. The polypeptide is 2,3-bisphosphoglycerate-dependent phosphoglycerate mutase (Borrelia recurrentis (strain A1)).